We begin with the raw amino-acid sequence, 116 residues long: L-amino-acid oxidase BjussuLAAO-II (116 aa).

An FAD-binding site is contributed by 42-45; sequence GPMR. Residues Arg45 and His78 each contribute to the substrate site.

It belongs to the flavin monoamine oxidase family. FIG1 subfamily. Homodimer; non-covalently linked. Requires FAD as cofactor. In terms of processing, glycosylated. As to expression, expressed by the venom gland.

It is found in the secreted. It catalyses the reaction an L-alpha-amino acid + O2 + H2O = a 2-oxocarboxylate + H2O2 + NH4(+). The catalysed reaction is L-leucine + O2 + H2O = 4-methyl-2-oxopentanoate + H2O2 + NH4(+). The enzyme catalyses L-phenylalanine + O2 + H2O = 3-phenylpyruvate + H2O2 + NH4(+). It carries out the reaction L-methionine + O2 + H2O = 4-methylsulfanyl-2-oxobutanoate + H2O2 + NH4(+). It catalyses the reaction L-isoleucine + O2 + H2O = (S)-3-methyl-2-oxopentanoate + H2O2 + NH4(+). The catalysed reaction is L-histidine + O2 + H2O = 3-(imidazol-5-yl)pyruvate + H2O2 + NH4(+). The enzyme catalyses L-tyrosine + O2 + H2O = 3-(4-hydroxyphenyl)pyruvate + H2O2 + NH4(+). It carries out the reaction L-tryptophan + O2 + H2O = indole-3-pyruvate + H2O2 + NH4(+). Its activity is regulated as follows. Its enzymatic activities is reduced by the presence of Zn(2+), Al(3+), Cu(2+), Na(+) or Ni(2+) salts. Its function is as follows. Catalyzes an oxidative deamination of predominantly hydrophobic and aromatic L-amino acids, thus producing hydrogen peroxide that may contribute to the diverse toxic effects of this enzyme. Shows very high enzymatic activity on L-Met and L-Leu, high activity on L-Ile, L-Phe and L-Tyr and moderate activity on L-His. Exhibits diverse biological activities, such as hemorrhage, hemolysis, edema, apoptosis of vascular endothelial cells or tumor cell lines, and antibacterial, as well as regulation of platelet aggregation. Effects of snake L-amino oxidases on platelets are controversial, since they either induce aggregation or inhibit agonist-induced aggregation. These different effects are probably due to different experimental conditions. In vitro, has a strong antiprotozoal effect against Leishmania amazonensis (IC(50)=4.56 ug/mL) and Trypanosoma cruzi (IC(50)=4.85 ug/mL). It also causes cell death and DNA damage in hepatocarcinoma cells (HepG2) in vitro by inducing oxidative stress. It exerts cytotoxicity towards colorectal adenocarcinomahuman cells (Caco-2) by acting on multiple intracellular targets. It diminishes cell viability by decreasing mitochondrial activity, the activity of acid phosphatases, and lysosomal function. In addition, it increases intracellular levels of reactive oxygen species and DNA damage, it elevates the expression of the pro-inflammatory cytokine genes TNF and IL6, and lowers the expression of the apoptotic-related genes. Also induces cytotoxicity (IC(50)=1.80 ug/mL) and apoptosis in MCF-7 cells (a human breast adeno-carcinoma cell line) by activating the intrinsic and extrinsic apoptosis pathways, but are not cytotoxic towards MCF-10A cells (a non-tumorigenic human breast epithelial cell line). In Bothrops jararacussu (Jararacussu), this protein is L-amino-acid oxidase BjussuLAAO-II.